A 137-amino-acid chain; its full sequence is Large ribosomal subunit protein uL16 (137 aa).

Belongs to the universal ribosomal protein uL16 family. In terms of assembly, part of the 50S ribosomal subunit.

In terms of biological role, binds 23S rRNA and is also seen to make contacts with the A and possibly P site tRNAs. The chain is Large ribosomal subunit protein uL16 from Spiroplasma kunkelii.